Here is a 511-residue protein sequence, read N- to C-terminus: Histidine ammonia-lyase 2 (511 aa).

Residues Ser-144 to Gly-146 constitute a cross-link (5-imidazolinone (Ser-Gly)). Ser-145 is subject to 2,3-didehydroalanine (Ser).

Belongs to the PAL/histidase family. In terms of processing, contains an active site 4-methylidene-imidazol-5-one (MIO), which is formed autocatalytically by cyclization and dehydration of residues Ser-Ser-Gly.

The protein localises to the cytoplasm. It carries out the reaction L-histidine = trans-urocanate + NH4(+). The protein operates within amino-acid degradation; L-histidine degradation into L-glutamate; N-formimidoyl-L-glutamate from L-histidine: step 1/3. This chain is Histidine ammonia-lyase 2 (hutH2), found in Fusobacterium nucleatum subsp. nucleatum (strain ATCC 25586 / DSM 15643 / BCRC 10681 / CIP 101130 / JCM 8532 / KCTC 2640 / LMG 13131 / VPI 4355).